Reading from the N-terminus, the 156-residue chain is Acyl carrier protein, mitochondrial (156 aa).

Residues 1–68 (MASRVLCACV…GTVTHLCRQY (68 aa)) constitute a mitochondrion transit peptide. The Carrier domain maps to 77–152 (DGIKDRVLYV…EIVDYIADKK (76 aa)). Lysine 88 carries the N6-acetyllysine modification. O-(pantetheine 4'-phosphoryl)serine is present on serine 112.

This sequence belongs to the acyl carrier protein (ACP) family. In terms of assembly, mammalian complex I is composed of 45 different subunits. Interacts with ETFRF1. Identified in a complex composed of MALSU1, MIEF1 upstream open reading frame protein and NDUFAB1; within the trimeric complex, MIEF1 upstream open reading frame protein functions as a bridging scaffold that interacts with MALSU1 on one side, and with NDUFAB1 on the other side. The complex interacts with the mitochondrial large ribosomal subunit. Interacts with alpha-1-microglobulin chain; this interaction is required for the maintenance of mitochondrial redox homeostasis. Component of the mitochondrial core iron-sulfur cluster (ISC) complex composed of NFS1, LYRM4, NDUFAB1, ISCU, FXN, and FDX2; this complex is a heterohexamer containing two copies of each monomer. Component of the cyteine desulfurase complex composed of NFS1, LYRM4 and NDUFAB1; this complex contributes to the stability and cysteine desulfurase activity of NFS1. Phosphopantetheinylation at Ser-112 is essential for interactions with LYR motif-containing proteins.

Its subcellular location is the mitochondrion. Functionally, carrier of the growing fatty acid chain in fatty acid biosynthesis. Accessory and non-catalytic subunit of the mitochondrial membrane respiratory chain NADH dehydrogenase (Complex I), which functions in the transfer of electrons from NADH to the respiratory chain. Accessory protein, of the core iron-sulfur cluster (ISC) assembly complex, that regulates, in association with LYRM4, the stability and the cysteine desulfurase activity of NFS1 and participates in the [2Fe-2S] clusters assembly on the scaffolding protein ISCU. The core iron-sulfur cluster (ISC) assembly complex is involved in the de novo synthesis of a [2Fe-2S] cluster, the first step of the mitochondrial iron-sulfur protein biogenesis. This process is initiated by the cysteine desulfurase complex (NFS1:LYRM4:NDUFAB1) that produces persulfide which is delivered on the scaffold protein ISCU in a FXN-dependent manner. Then this complex is stabilized by FDX2 which provides reducing equivalents to accomplish the [2Fe-2S] cluster assembly. Finally, the [2Fe-2S] cluster is transferred from ISCU to chaperone proteins, including HSCB, HSPA9 and GLRX5. The chain is Acyl carrier protein, mitochondrial from Mus musculus (Mouse).